The primary structure comprises 374 residues: O-methyltransferase acrG (374 aa).

S-adenosyl-L-homocysteine-binding residues include Y19, N70, D96, S128, and F129. F245 contributes to the Mg(2+) binding site.

It belongs to the methyltransferase superfamily. Type-7 methyltransferase family.

It participates in secondary metabolite biosynthesis. O-methyltransferase; part of the cluster that mediates the biosynthesis of acurin A, a highly reduced polyketide coupled to a serine via a peptide bond. The activities of the highly reducing polyketide synthase acrA and the nonribosomal peptide synthetase acrB are collectively responsible for the synthesis of the acurin A core structure with a heptaketide backbone produced by acrA covalently fused to a L-serine by acrB. After the formation of the PK-NRP hybrid product, it is detached from acrB by reductive release to set up the formation of the lactam ring by aldol condensation. The hydrolyase acrC then catalyzes water loss to generate a double bond in the ring. This double bond is probably reduced, which is followed by three oxidations at C-22 to generate the carboxylic acid moiety, involving probably the FAD-binding monooxygenase acrE and the cytochrome P450 monooxygenases acrD and acrF. Finally, a last methylation step performed by the O-methyltransferase acrG leads to the production of acurin A. The sequence is that of O-methyltransferase acrG from Aspergillus aculeatus (strain ATCC 16872 / CBS 172.66 / WB 5094).